Reading from the N-terminus, the 318-residue chain is NADH-ubiquinone oxidoreductase chain 1 (318 aa).

A run of 8 helical transmembrane segments spans residues 2–22, 69–89, 102–122, 147–167, 172–192, 231–251, 253–273, and 294–314; these read LLTN…FLTL, LMFI…WAPL, ILFI…SGWA, AIIL…TLTI, MWLI…TLAE, IILM…NPLF, ELHT…FLWI, and LPLT…LAGI.

Belongs to the complex I subunit 1 family.

Its subcellular location is the mitochondrion inner membrane. The enzyme catalyses a ubiquinone + NADH + 5 H(+)(in) = a ubiquinol + NAD(+) + 4 H(+)(out). Functionally, core subunit of the mitochondrial membrane respiratory chain NADH dehydrogenase (Complex I) that is believed to belong to the minimal assembly required for catalysis. Complex I functions in the transfer of electrons from NADH to the respiratory chain. The immediate electron acceptor for the enzyme is believed to be ubiquinone. The chain is NADH-ubiquinone oxidoreductase chain 1 (MT-ND1) from Bradypus variegatus (Brown-throated three-fingered sloth).